Consider the following 447-residue polypeptide: Tubulin beta-5 chain (447 aa).

GTP is bound by residues Gln-11, Glu-69, Ser-138, Gly-142, Thr-143, Gly-144, Asn-204, and Asn-226. Glu-69 is a binding site for Mg(2+).

This sequence belongs to the tubulin family. Dimer of alpha and beta chains. A typical microtubule is a hollow water-filled tube with an outer diameter of 25 nm and an inner diameter of 15 nM. Alpha-beta heterodimers associate head-to-tail to form protofilaments running lengthwise along the microtubule wall with the beta-tubulin subunit facing the microtubule plus end conferring a structural polarity. Microtubules usually have 13 protofilaments but different protofilament numbers can be found in some organisms and specialized cells. Mg(2+) serves as cofactor.

Its subcellular location is the cytoplasm. The protein localises to the cytoskeleton. Tubulin is the major constituent of microtubules, a cylinder consisting of laterally associated linear protofilaments composed of alpha- and beta-tubulin heterodimers. Microtubules grow by the addition of GTP-tubulin dimers to the microtubule end, where a stabilizing cap forms. Below the cap, tubulin dimers are in GDP-bound state, owing to GTPase activity of alpha-tubulin. The protein is Tubulin beta-5 chain (TUBB5) of Triticum aestivum (Wheat).